The following is a 198-amino-acid chain: Ribonuclease HII (198 aa).

One can recognise an RNase H type-2 domain in the interval 3–194 (RRVCGVDEAG…VKRCLALGQQ (192 aa)). 3 residues coordinate a divalent metal cation: D9, E10, and D101.

This sequence belongs to the RNase HII family. The cofactor is Mn(2+). Mg(2+) serves as cofactor.

Its subcellular location is the cytoplasm. The enzyme catalyses Endonucleolytic cleavage to 5'-phosphomonoester.. Endonuclease that specifically degrades the RNA of RNA-DNA hybrids. In Laribacter hongkongensis (strain HLHK9), this protein is Ribonuclease HII.